The primary structure comprises 466 residues: ATP synthase subunit beta (466 aa).

Position 153–160 (153–160 (GGAGVGKT)) interacts with ATP.

This sequence belongs to the ATPase alpha/beta chains family. In terms of assembly, F-type ATPases have 2 components, CF(1) - the catalytic core - and CF(0) - the membrane proton channel. CF(1) has five subunits: alpha(3), beta(3), gamma(1), delta(1), epsilon(1). CF(0) has three main subunits: a(1), b(2) and c(9-12). The alpha and beta chains form an alternating ring which encloses part of the gamma chain. CF(1) is attached to CF(0) by a central stalk formed by the gamma and epsilon chains, while a peripheral stalk is formed by the delta and b chains.

Its subcellular location is the cell membrane. The enzyme catalyses ATP + H2O + 4 H(+)(in) = ADP + phosphate + 5 H(+)(out). Functionally, produces ATP from ADP in the presence of a proton gradient across the membrane. The catalytic sites are hosted primarily by the beta subunits. The sequence is that of ATP synthase subunit beta from Clostridium acetobutylicum (strain ATCC 824 / DSM 792 / JCM 1419 / IAM 19013 / LMG 5710 / NBRC 13948 / NRRL B-527 / VKM B-1787 / 2291 / W).